A 202-amino-acid chain; its full sequence is MEHYISLLIRSVFIENMALSFFLGMCTFLAVSKKVTTAMGLGVAVIVVLAISVPANQIIYQGILAPGALAWAGVPDADLSFLKFITFIGVIAALVQILEMTLDKYFPPLYNALGIFLPLITVNCAIFGAVAFMVERDYNLTESLVFGVGSGIGWALAIVLLAAVREKMKYSDVPNGLRGLGITFISAGLMALGFMSFSGVSL.

6 helical membrane-spanning segments follow: residues 11–31, 35–55, 79–99, 114–134, 144–164, and 180–200; these read SVFIENMALSFFLGMCTFLAV, VTTAMGLGVAVIVVLAISVPA, LSFLKFITFIGVIAALVQILE, GIFLPLITVNCAIFGAVAFMV, LVFGVGSGIGWALAIVLLAAV, and LGITFISAGLMALGFMSFSGV.

This sequence belongs to the NqrDE/RnfAE family. In terms of assembly, composed of six subunits; NqrA, NqrB, NqrC, NqrD, NqrE and NqrF.

It is found in the cell inner membrane. The enzyme catalyses a ubiquinone + n Na(+)(in) + NADH + H(+) = a ubiquinol + n Na(+)(out) + NAD(+). Functionally, NQR complex catalyzes the reduction of ubiquinone-1 to ubiquinol by two successive reactions, coupled with the transport of Na(+) ions from the cytoplasm to the periplasm. NqrA to NqrE are probably involved in the second step, the conversion of ubisemiquinone to ubiquinol. The protein is Na(+)-translocating NADH-quinone reductase subunit E of Shewanella denitrificans (strain OS217 / ATCC BAA-1090 / DSM 15013).